The following is a 1337-amino-acid chain: Protein HEG homolog 1 (1337 aa).

The first 31 residues, 1–31 (MATPRAPRWPPPSLLLLLLLPLLLLPPAAPG), serve as a signal peptide directing secretion. 2 stretches are compositionally biased toward low complexity: residues 28–40 (AAPGARGSLPSPA) and 54–66 (PGAGHTAPGPGVA). 6 disordered regions span residues 28 to 149 (AAPG…SNMA), 175 to 211 (SSLLSLESLPESPSSSRSQRRITPSQTESGTSLGFLE), 235 to 296 (ASHP…QNPS), 313 to 675 (VPRT…PSPI), 723 to 767 (LIPS…TVSL), and 860 to 909 (EGNR…PQTT). At 32 to 1204 (ARGSLPSPAH…GLNCGNPYQL (1173 aa)) the chain is on the extracellular side. Positions 118 to 131 (TAQNARMSHSSSEG) are enriched in polar residues. The span at 175–190 (SSLLSLESLPESPSSS) shows a compositional bias: low complexity. 4 stretches are compositionally biased toward polar residues: residues 195–206 (RITPSQTESGTS), 247–258 (VLSQKRNSSGQE), 283–296 (IKNGNNFTALQNPS), and 340–361 (GITSMSVRSSPSVKDSRTNSGL). A compositionally biased stretch (gly residues) spans 470–480 (RGGGEDSGMGG). Low complexity-rich tracts occupy residues 486-502 (SSSSSSSTSSSESLDSS) and 556-575 (SYSEASESSTSSVKISDSPS). 2 stretches are compositionally biased toward polar residues: residues 576–585 (QAQPKQSSMS) and 592–617 (AQSSTESPVLHTSNLPTYTSTVNMPN). Positions 637-675 (PSTQPSPSQPQPFSSALPSTRSPGSTSETTTSSPSPSPI) are enriched in low complexity. Composition is skewed to polar residues over residues 725–742 (PSNQTANPKNQSTPQQEK) and 751–763 (SLVSPPTDSTKAV). Positions 868 to 884 (PTTQPIPLTTSTTSAGE) are enriched in low complexity. Over residues 885–896 (RTTELGRAEESS) the composition is skewed to basic and acidic residues. The segment covering 897–909 (PSHFLTPSSPQTT) has biased composition (polar residues). Residues 941-979 (PVNSCTVNPCLHDGKCIVDLTGRGYRCVCPPAWQGENCS) enclose the EGF-like 1 domain. 6 cysteine pairs are disulfide-bonded: C945-C956, C950-C967, C969-C978, C985-C996, C990-C1005, and C1007-C1018. Positions 981–1019 (DVNECLSSPCPPLATCNNTQGSFTCRCPVGYQLEKGICN) constitute an EGF-like 2; calcium-binding domain. N1093 carries N-linked (GlcNAc...) asparagine glycosylation. A helical transmembrane segment spans residues 1205–1225 (ITVVIAAAGGGLLLILGVALI). Over 1226 to 1337 (VTCCRKSKND…SDESRRRDYF (112 aa)) the chain is Cytoplasmic. At S1315 the chain carries Phosphoserine.

In terms of assembly, interacts with CCM2 and KRIT1; KRIT1 markedly facilitates interaction with CCM2.

The protein resides in the cell membrane. Its subcellular location is the cell junction. Functionally, receptor component of the CCM signaling pathway which is a crucial regulator of heart and vessel formation and integrity. May be acting by stabilizing endothelial cell junctions. The sequence is that of Protein HEG homolog 1 (Heg1) from Mus musculus (Mouse).